The sequence spans 401 residues: Carbamoyl phosphate synthase small chain (401 aa).

The segment at 1 to 203 is CPSase; it reads MTETAPWTTR…KGYGTLGEAD (203 aa). L-glutamine contacts are provided by serine 56, glycine 255, and glycine 257. Residues 207–395 form the Glutamine amidotransferase type-1 domain; sequence HVVCVDFGVK…VNLLRENKGE (189 aa). The active-site Nucleophile is the cysteine 284. Residues leucine 285, glutamine 288, asparagine 326, glycine 328, and phenylalanine 329 each contribute to the L-glutamine site. Residues histidine 368 and glutamate 370 contribute to the active site.

Belongs to the CarA family. Composed of two chains; the small (or glutamine) chain promotes the hydrolysis of glutamine to ammonia, which is used by the large (or ammonia) chain to synthesize carbamoyl phosphate. Tetramer of heterodimers (alpha,beta)4.

It carries out the reaction hydrogencarbonate + L-glutamine + 2 ATP + H2O = carbamoyl phosphate + L-glutamate + 2 ADP + phosphate + 2 H(+). The catalysed reaction is L-glutamine + H2O = L-glutamate + NH4(+). The protein operates within amino-acid biosynthesis; L-arginine biosynthesis; carbamoyl phosphate from bicarbonate: step 1/1. It functions in the pathway pyrimidine metabolism; UMP biosynthesis via de novo pathway; (S)-dihydroorotate from bicarbonate: step 1/3. Small subunit of the glutamine-dependent carbamoyl phosphate synthetase (CPSase). CPSase catalyzes the formation of carbamoyl phosphate from the ammonia moiety of glutamine, carbonate, and phosphate donated by ATP, constituting the first step of 2 biosynthetic pathways, one leading to arginine and/or urea and the other to pyrimidine nucleotides. The small subunit (glutamine amidotransferase) binds and cleaves glutamine to supply the large subunit with the substrate ammonia. The sequence is that of Carbamoyl phosphate synthase small chain from Agrobacterium fabrum (strain C58 / ATCC 33970) (Agrobacterium tumefaciens (strain C58)).